We begin with the raw amino-acid sequence, 118 residues long: Ribonuclease P protein component (118 aa).

This sequence belongs to the RnpA family. In terms of assembly, consists of a catalytic RNA component (M1 or rnpB) and a protein subunit.

The catalysed reaction is Endonucleolytic cleavage of RNA, removing 5'-extranucleotides from tRNA precursor.. RNaseP catalyzes the removal of the 5'-leader sequence from pre-tRNA to produce the mature 5'-terminus. It can also cleave other RNA substrates such as 4.5S RNA. The protein component plays an auxiliary but essential role in vivo by binding to the 5'-leader sequence and broadening the substrate specificity of the ribozyme. This is Ribonuclease P protein component from Levilactobacillus brevis (strain ATCC 367 / BCRC 12310 / CIP 105137 / JCM 1170 / LMG 11437 / NCIMB 947 / NCTC 947) (Lactobacillus brevis).